The following is a 561-amino-acid chain: Dihydroxy-acid dehydratase (561 aa).

Aspartate 78 is a binding site for Mg(2+). Cysteine 119 serves as a coordination point for [2Fe-2S] cluster. Mg(2+) is bound by residues aspartate 120 and lysine 121. N6-carboxylysine is present on lysine 121. A [2Fe-2S] cluster-binding site is contributed by cysteine 192. Glutamate 448 is a binding site for Mg(2+). The active-site Proton acceptor is serine 474.

This sequence belongs to the IlvD/Edd family. As to quaternary structure, homodimer. [2Fe-2S] cluster serves as cofactor. The cofactor is Mg(2+).

It catalyses the reaction (2R)-2,3-dihydroxy-3-methylbutanoate = 3-methyl-2-oxobutanoate + H2O. It carries out the reaction (2R,3R)-2,3-dihydroxy-3-methylpentanoate = (S)-3-methyl-2-oxopentanoate + H2O. It participates in amino-acid biosynthesis; L-isoleucine biosynthesis; L-isoleucine from 2-oxobutanoate: step 3/4. It functions in the pathway amino-acid biosynthesis; L-valine biosynthesis; L-valine from pyruvate: step 3/4. In terms of biological role, functions in the biosynthesis of branched-chain amino acids. Catalyzes the dehydration of (2R,3R)-2,3-dihydroxy-3-methylpentanoate (2,3-dihydroxy-3-methylvalerate) into 2-oxo-3-methylpentanoate (2-oxo-3-methylvalerate) and of (2R)-2,3-dihydroxy-3-methylbutanoate (2,3-dihydroxyisovalerate) into 2-oxo-3-methylbutanoate (2-oxoisovalerate), the penultimate precursor to L-isoleucine and L-valine, respectively. This Sulfurimonas denitrificans (strain ATCC 33889 / DSM 1251) (Thiomicrospira denitrificans (strain ATCC 33889 / DSM 1251)) protein is Dihydroxy-acid dehydratase.